The chain runs to 734 residues: Photosystem I P700 chlorophyll a apoprotein A2 (734 aa).

8 consecutive transmembrane segments (helical) span residues 46–69 (IFAS…FHVA), 135–158 (LYTG…LHLQ), 175–199 (LNHH…HVAI), 273–291 (IAHH…GHMY), 330–353 (LHFQ…QHMY), 369–395 (AALY…IFFI), 417–439 (AIIS…LYVH), and 517–535 (FLVH…LILV). Residues cysteine 559 and cysteine 568 each coordinate [4Fe-4S] cluster. The next 2 helical transmembrane spans lie at 575-596 (AFYL…YWHW) and 643-665 (LSVW…MFLI). Histidine 654, methionine 662, and tyrosine 670 together coordinate chlorophyll a. Tryptophan 671 provides a ligand contact to phylloquinone. A helical transmembrane segment spans residues 707 to 727 (LVGLAHFSVGYIFTYAAFLIA).

The protein belongs to the PsaA/PsaB family. The PsaA/B heterodimer binds the P700 chlorophyll special pair and subsequent electron acceptors. PSI consists of a core antenna complex that captures photons, and an electron transfer chain that converts photonic excitation into a charge separation. The eukaryotic PSI reaction center is composed of at least 11 subunits. The cofactor is P700 is a chlorophyll a/chlorophyll a' dimer, A0 is one or more chlorophyll a, A1 is one or both phylloquinones and FX is a shared 4Fe-4S iron-sulfur center..

The protein localises to the plastid. It is found in the chloroplast thylakoid membrane. The enzyme catalyses reduced [plastocyanin] + hnu + oxidized [2Fe-2S]-[ferredoxin] = oxidized [plastocyanin] + reduced [2Fe-2S]-[ferredoxin]. In terms of biological role, psaA and PsaB bind P700, the primary electron donor of photosystem I (PSI), as well as the electron acceptors A0, A1 and FX. PSI is a plastocyanin-ferredoxin oxidoreductase, converting photonic excitation into a charge separation, which transfers an electron from the donor P700 chlorophyll pair to the spectroscopically characterized acceptors A0, A1, FX, FA and FB in turn. Oxidized P700 is reduced on the lumenal side of the thylakoid membrane by plastocyanin. The polypeptide is Photosystem I P700 chlorophyll a apoprotein A2 (Psilotum nudum (Whisk fern)).